Reading from the N-terminus, the 310-residue chain is Olfactory receptor 2A4 (310 aa).

Over 1-24 the chain is Extracellular; it reads MGDNITSIREFLLLGFPVGPRIQM. A glycan (N-linked (GlcNAc...) asparagine) is linked at asparagine 4. Residues 25-48 form a helical membrane-spanning segment; sequence LLFGLFSLFYVFTLLGNGTILGLI. Topologically, residues 49–56 are cytoplasmic; it reads SLDSRLHA. The helical transmembrane segment at 57-78 threads the bilayer; the sequence is PMYFFLSHLAVVDIAYACNTVP. Topologically, residues 79 to 99 are extracellular; that stretch reads RMLVNLLHPAKPISFAGRMMQ. A helical membrane pass occupies residues 100-119; it reads TFLFSTFAVTECLLLVVMSY. Topologically, residues 120-138 are cytoplasmic; that stretch reads DLYVAICHPLRYLAIMTWR. Residues 139–157 form a helical membrane-spanning segment; sequence VCITLAVTSWTTGVLLSLI. Over 158–194 the chain is Extracellular; that stretch reads HLVLLLPLPFCRPQKIYHFFCEILAVLKLACADTHIN. A helical transmembrane segment spans residues 195–218; it reads ENMVLAGAISGLVGPLSTIVVSYM. Topologically, residues 219–235 are cytoplasmic; it reads CILCAILQIQSREVQRK. Residues 236 to 258 form a helical membrane-spanning segment; that stretch reads AFRTCFSHLCVIGLVYGTAIIMY. Topologically, residues 259 to 271 are extracellular; it reads VGPRYGNPKEQKK. A helical transmembrane segment spans residues 272–291; the sequence is YLLLFHSLFNPMLNPLICSL. The Cytoplasmic portion of the chain corresponds to 292–310; the sequence is RNSEVKNTLKRVLGVERAL.

It belongs to the G-protein coupled receptor 1 family.

The protein resides in the cell membrane. Its function is as follows. Odorant receptor. The polypeptide is Olfactory receptor 2A4 (OR2A4) (Homo sapiens (Human)).